The following is a 359-amino-acid chain: Lachesin (359 aa).

The first 25 residues, 1 to 25 (MWRPSISNCVWSTLLLAIFVQQTLA), serve as a signal peptide directing secretion. One can recognise an Ig-like V-type domain in the interval 29–130 (PTISYITQEQ…HKVSAEVKLS (102 aa)). Residues cysteine 50 and cysteine 113 are joined by a disulfide bond. 2 N-linked (GlcNAc...) asparagine glycosylation sites follow: asparagine 92 and asparagine 140. Ig-like C2-type domains are found at residues 135-221 (PVIS…INVE) and 226-317 (PVIT…ARVN). 2 cysteine pairs are disulfide-bonded: cysteine 157-cysteine 204 and cysteine 247-cysteine 303. A lipid anchor (GPI-anchor amidated alanine) is attached at alanine 336. Residues 337–359 (GAEDVSATSFALVGILAALLFAR) constitute a propeptide, removed in mature form.

In terms of tissue distribution, expressed on differentiating neuronal cells from the onset of neurogenesis in both the central and peripheral nervous systems. First detected in the cellularized blastoderm, apart from in the ventral side. Expression persists uniformly in the early ectoderm until the end of gastrulation. From stage 10, expressed in an alternating strong/weak pattern in each segment until stage 15 when it disappears. From stage 11, expressed in subsets of neurons and later subsets of glial cells. From early stage 13, strongly expressed in trachea, hindgut, foregut and the nervous system.

Its subcellular location is the cell membrane. Required for normal tracheal development and maintenance of the trans-epithelial diffusion barrier. Functions as a homophilic cell-adhesion molecule. May play a role in early neuronal differentiation and axon outgrowth. The chain is Lachesin (Lac) from Drosophila melanogaster (Fruit fly).